A 238-amino-acid polypeptide reads, in one-letter code: 5'-deoxynucleotidase YBR242W (238 aa).

In terms of domain architecture, HD spans 77–183 (ISDHMYRLSI…VKDIDKYEML (107 aa)). His80, His108, Asp109, Glu112, Asp117, Ile118, and Asp178 together coordinate a divalent metal cation.

It belongs to the HDDC2 family. As to quaternary structure, homodimer. Mn(2+) is required as a cofactor. The cofactor is Co(2+). Mg(2+) serves as cofactor.

It catalyses the reaction a 2'-deoxyribonucleoside 5'-phosphate + H2O = a 2'-deoxyribonucleoside + phosphate. Its function is as follows. Catalyzes the dephosphorylation of the nucleoside 5'-monophosphates deoxyadenosine monophosphate (dAMP), deoxycytidine monophosphate (dCMP), deoxyguanosine monophosphate (dGMP) and deoxythymidine monophosphate (dTMP). This chain is 5'-deoxynucleotidase YBR242W, found in Saccharomyces cerevisiae (strain ATCC 204508 / S288c) (Baker's yeast).